The sequence spans 1736 residues: Collagen alpha-2(XI) chain (1736 aa).

Positions 1 to 27 (MERCSRCHHLLLLVLLLLWLSAAPAWA) are cleaved as a signal peptide. In terms of domain architecture, Laminin G-like spans 57-228 (DVAYRVSRPA…ESCDQKELEC (172 aa)). Residues 215–486 (QAAYESCDQK…ILQQARVALR (272 aa)) are nonhelical region. Disordered stretches follow at residues 229–465 (EGGW…DKGP) and 485–1539 (LRGP…SPGG). Over residues 258-270 (PQNQEPQAQSTES) the composition is skewed to polar residues. Low complexity predominate over residues 363–376 (ALSAETARSEAAAR). Collagen-like domains are found at residues 399-447 (GPPG…GPPG), 487-545 (GPPG…ADGA), and 546-587 (RGMP…PPGE). The span at 400–413 (PPGPEGPAGFPGPP) shows a compositional bias: pro residues. The interval 487–1500 (GPPGPMGYTG…PGHPGPPGEV (1014 aa)) is triple-helical region. Residues 515–533 (DLGPQGPRGPQGLMGPPGK) show a composition bias toward low complexity. The segment covering 615-624 (KGPPGIPGPP) has biased composition (pro residues). Low complexity predominate over residues 650 to 663 (QQGTPGTQGLPGPQ). Basic and acidic residues predominate over residues 765 to 774 (RGEDGPEGPK). Low complexity predominate over residues 842-861 (PTGPRGQRGPRGATGKSGAK). The segment covering 994-1003 (GTAGGPGLKG) has biased composition (gly residues). The span at 1029-1040 (IGPPGRPGPQGP) shows a compositional bias: pro residues. Collagen-like domains follow at residues 1072 to 1127 (GPAG…ADGE) and 1128 to 1172 (PGAR…ETGD). The span at 1115–1133 (PVGQPGAAGADGEPGARGP) shows a compositional bias: low complexity. Over residues 1176-1187 (MGPPGPPGPRGP) the composition is skewed to pro residues. Residues 1217–1230 (ESGSPGVQGEPGVK) are compositionally biased toward low complexity. 2 stretches are compositionally biased toward basic and acidic residues: residues 1232-1241 (PRGERGEKGE) and 1287-1296 (DGAKGDRGED). 2 stretches are compositionally biased toward low complexity: residues 1341 to 1364 (PGAV…KPGP) and 1376 to 1386 (QQGRPGATGQA). Pro residues predominate over residues 1388–1397 (PPGPVGPPGL). Over residues 1413-1422 (PGLIGLIGPP) the composition is skewed to low complexity. Positions 1444–1499 (GETGIPGASGPIGPGGPPGLPGPAGPKGAKGATGPAGPKGEKGVQGPPGHPGPPGE) constitute a Collagen-like 6 domain. Residues 1457–1467 (PGGPPGLPGPA) show a composition bias toward pro residues. Over residues 1469-1481 (PKGAKGATGPAGP) the composition is skewed to low complexity. Residues 1501–1736 (IQPLPIQMPK…VLLGPVCFMG (236 aa)) constitute a propeptide, C-terminal propeptide. One can recognise a Fibrillar collagen NC1 domain in the interval 1541-1735 (EEIFGSLDSL…GVLLGPVCFM (195 aa)). An intrachain disulfide couples Cys1571 to Cys1603. Residues Asp1589, Asn1591, Gln1592, Cys1594, and Asp1597 each contribute to the Ca(2+) site. Residues Asn1604 and Asn1650 are each glycosylated (N-linked (GlcNAc...) asparagine). Intrachain disulfides connect Cys1612/Cys1733 and Cys1655/Cys1689.

Belongs to the fibrillar collagen family. Trimers composed of three different chains: alpha 1(XI), alpha 2(XI), and alpha 3(XI). Alpha 3(XI) is a post-translational modification of alpha 1(II). Alpha 1(V) can also be found instead of alpha 3(XI)=1(II). In terms of processing, prolines at the third position of the tripeptide repeating unit (G-X-Y) are hydroxylated in some or all of the chains.

The protein resides in the secreted. Its subcellular location is the extracellular space. The protein localises to the extracellular matrix. Its function is as follows. May play an important role in fibrillogenesis by controlling lateral growth of collagen II fibrils. The polypeptide is Collagen alpha-2(XI) chain (COL11A2) (Bos taurus (Bovine)).